A 202-amino-acid chain; its full sequence is dITP/XTP pyrophosphatase (202 aa).

Thr-7–Lys-12 serves as a coordination point for substrate. Mg(2+) is bound by residues Glu-37 and Asp-66. Asp-66 acts as the Proton acceptor in catalysis. Residues Ser-67, Phe-155–Asp-158, Lys-178, and His-183–Arg-184 each bind substrate.

The protein belongs to the HAM1 NTPase family. In terms of assembly, homodimer. It depends on Mg(2+) as a cofactor.

The enzyme catalyses XTP + H2O = XMP + diphosphate + H(+). It carries out the reaction dITP + H2O = dIMP + diphosphate + H(+). It catalyses the reaction ITP + H2O = IMP + diphosphate + H(+). Its function is as follows. Pyrophosphatase that catalyzes the hydrolysis of nucleoside triphosphates to their monophosphate derivatives, with a high preference for the non-canonical purine nucleotides XTP (xanthosine triphosphate), dITP (deoxyinosine triphosphate) and ITP. Seems to function as a house-cleaning enzyme that removes non-canonical purine nucleotides from the nucleotide pool, thus preventing their incorporation into DNA/RNA and avoiding chromosomal lesions. This chain is dITP/XTP pyrophosphatase, found in Aquifex aeolicus (strain VF5).